A 628-amino-acid polypeptide reads, in one-letter code: MKLTEIQDPSFLKRMSVSELELFAGDIRRFLIEELATTGGHLAPNLGVVELTLALHREFDSPNDKFVWDVGHQAYVHKILTGRAGQFDTLRQHKGLCGFPKRNESVHDVWETGHSSTSLSAAMGIAVSNELKGNDDRAIAIIGDGALTGGMALEALNHIGAEQQNVIVILNDNEMSIAPNVGAMHQMLGRIRSSRKVRYAQDELETLIKKIPLIGGKLEKGGEKLKEAVKGALVPGMFFEELGFNYYGPVDGHDLTDLIEQLNYVKKEEGPVLLHVITKKGKGYRPAEYDGIGTWHGLGPYKIESGEVIKGKSKAPSYSFTVADTLTKMAREDDKLTLITPAMSVGSKLDCFEKEFPERMFDVGIAEQHAVTFAAGQATQGMKPVVSIYSTFFQRAYDQLVHDVARQNLDVTFTIDRSGLVGADGETHQGVFDIAFMRHVPNIRIVMAKDENELQHLLYSAVKYEGPIAVRFPRGEGIGVPMDETLHEISLDTWDVEREGTDVAIMAFGPQVQDALKIAELLEGDVSVRVINARTIKPLDEKMLNALYAEGIPLVTLEEAVLKGGFGSAVLEHANEQEAFPRVKRFGIPDWYIEHGGVNELLEEIGLLPGQIAEEVRSFVNQGKKQSV.

Residues histidine 72 and glycine 113–serine 115 contribute to the thiamine diphosphate site. Aspartate 144 is a binding site for Mg(2+). Residues glycine 145 to alanine 146, asparagine 173, tyrosine 284, and glutamate 367 contribute to the thiamine diphosphate site. Asparagine 173 contributes to the Mg(2+) binding site.

It belongs to the transketolase family. DXPS subfamily. Homodimer. Mg(2+) serves as cofactor. Thiamine diphosphate is required as a cofactor.

It catalyses the reaction D-glyceraldehyde 3-phosphate + pyruvate + H(+) = 1-deoxy-D-xylulose 5-phosphate + CO2. Its pathway is metabolic intermediate biosynthesis; 1-deoxy-D-xylulose 5-phosphate biosynthesis; 1-deoxy-D-xylulose 5-phosphate from D-glyceraldehyde 3-phosphate and pyruvate: step 1/1. In terms of biological role, catalyzes the acyloin condensation reaction between C atoms 2 and 3 of pyruvate and glyceraldehyde 3-phosphate to yield 1-deoxy-D-xylulose-5-phosphate (DXP). The polypeptide is 1-deoxy-D-xylulose-5-phosphate synthase (Exiguobacterium sibiricum (strain DSM 17290 / CCUG 55495 / CIP 109462 / JCM 13490 / 255-15)).